A 428-amino-acid chain; its full sequence is Enolase (428 aa).

(2R)-2-phosphoglycerate is bound at residue Gln-167. The Proton donor role is filled by Glu-209. Mg(2+) contacts are provided by Asp-246, Glu-288, and Asp-315. 4 residues coordinate (2R)-2-phosphoglycerate: Lys-340, Arg-369, Ser-370, and Lys-391. The active-site Proton acceptor is the Lys-340.

This sequence belongs to the enolase family. Component of the RNA degradosome, a multiprotein complex involved in RNA processing and mRNA degradation. Mg(2+) serves as cofactor.

The protein resides in the cytoplasm. It localises to the secreted. It is found in the cell surface. The enzyme catalyses (2R)-2-phosphoglycerate = phosphoenolpyruvate + H2O. It functions in the pathway carbohydrate degradation; glycolysis; pyruvate from D-glyceraldehyde 3-phosphate: step 4/5. Its function is as follows. Catalyzes the reversible conversion of 2-phosphoglycerate (2-PG) into phosphoenolpyruvate (PEP). It is essential for the degradation of carbohydrates via glycolysis. The chain is Enolase from Pseudomonas savastanoi pv. phaseolicola (strain 1448A / Race 6) (Pseudomonas syringae pv. phaseolicola (strain 1448A / Race 6)).